A 133-amino-acid chain; its full sequence is ATP synthase epsilon chain (133 aa).

The protein belongs to the ATPase epsilon chain family. As to quaternary structure, F-type ATPases have 2 components, CF(1) - the catalytic core - and CF(0) - the membrane proton channel. CF(1) has five subunits: alpha(3), beta(3), gamma(1), delta(1), epsilon(1). CF(0) has three main subunits: a, b and c.

The protein localises to the cell membrane. Produces ATP from ADP in the presence of a proton gradient across the membrane. The sequence is that of ATP synthase epsilon chain from Halalkalibacterium halodurans (strain ATCC BAA-125 / DSM 18197 / FERM 7344 / JCM 9153 / C-125) (Bacillus halodurans).